Reading from the N-terminus, the 363-residue chain is NADH-quinone oxidoreductase subunit H (363 aa).

A run of 10 helical transmembrane segments spans residues Val29–Trp49, Gly62–Phe82, Phe96–Phe116, Val127–Gly147, Ala163–Ala183, Phe202–Val222, Glu238–Leu257, Ile264–Val286, Lys299–Phe319, and Phe339–Ile359.

The protein belongs to the complex I subunit 1 family. In terms of assembly, NDH-1 is composed of 14 different subunits. Subunits NuoA, H, J, K, L, M, N constitute the membrane sector of the complex.

The protein resides in the cell inner membrane. The enzyme catalyses a quinone + NADH + 5 H(+)(in) = a quinol + NAD(+) + 4 H(+)(out). Its function is as follows. NDH-1 shuttles electrons from NADH, via FMN and iron-sulfur (Fe-S) centers, to quinones in the respiratory chain. The immediate electron acceptor for the enzyme in this species is believed to be ubiquinone. Couples the redox reaction to proton translocation (for every two electrons transferred, four hydrogen ions are translocated across the cytoplasmic membrane), and thus conserves the redox energy in a proton gradient. This subunit may bind ubiquinone. This is NADH-quinone oxidoreductase subunit H from Xanthomonas euvesicatoria pv. vesicatoria (strain 85-10) (Xanthomonas campestris pv. vesicatoria).